Consider the following 398-residue polypeptide: Chalcone synthase 1 (398 aa).

Residue 58 to 65 (KFKRMCDK) coordinates CoA. The active-site Acyl-thioester intermediate is cysteine 167. Residues threonine 200 and 219–220 (GD) contribute to the substrate site. CoA is bound at residue alanine 311.

The protein belongs to the thiolase-like superfamily. Chalcone/stilbene synthases family. As to quaternary structure, homodimer.

It catalyses the reaction (E)-4-coumaroyl-CoA + 3 malonyl-CoA + 3 H(+) = 2',4,4',6'-tetrahydroxychalcone + 3 CO2 + 4 CoA. The protein operates within secondary metabolite biosynthesis; flavonoid biosynthesis. Functionally, the primary product of this enzyme is 4,2',4',6'-tetrahydroxychalcone (also termed naringenin-chalcone or chalcone) which can under specific conditions spontaneously isomerize into naringenin. This is Chalcone synthase 1 (CHS1) from Oryza sativa subsp. indica (Rice).